The following is a 312-amino-acid chain: Serpentine receptor class gamma-31 (312 aa).

7 helical membrane-spanning segments follow: residues 6-26 (LITQFIYGTISTIIYSLTVVF), 38-58 (FLKLYICQFFFNMWMYWNFYI), 92-112 (FIFCQYHLGFMSYSNLFLTSI), 132-152 (TYILIALIFITPILFTYPLLV), 180-200 (FILVWMVVTVLLSIIANIICW), 218-238 (LFLVSFVTFVINCGVFSIAML), and 259-279 (LLSPFANDLLSLSTPYVLIIF).

Belongs to the nematode receptor-like protein srg family.

Its subcellular location is the membrane. The polypeptide is Serpentine receptor class gamma-31 (srg-31) (Caenorhabditis elegans).